Consider the following 252-residue polypeptide: tRNA (guanine-N(7)-)-methyltransferase (252 aa).

The S-adenosyl-L-methionine site is built by glutamate 80, glutamate 105, aspartate 132, and aspartate 155. Aspartate 155 is a catalytic residue. Substrate-binding positions include lysine 159, aspartate 191, and 231-234 (TKFE).

The protein belongs to the class I-like SAM-binding methyltransferase superfamily. TrmB family.

The enzyme catalyses guanosine(46) in tRNA + S-adenosyl-L-methionine = N(7)-methylguanosine(46) in tRNA + S-adenosyl-L-homocysteine. The protein operates within tRNA modification; N(7)-methylguanine-tRNA biosynthesis. Catalyzes the formation of N(7)-methylguanine at position 46 (m7G46) in tRNA. In Actinobacillus succinogenes (strain ATCC 55618 / DSM 22257 / CCUG 43843 / 130Z), this protein is tRNA (guanine-N(7)-)-methyltransferase.